Consider the following 285-residue polypeptide: Bifunctional protein FolD (285 aa).

NADP(+) is bound by residues 165-167, serine 190, and isoleucine 231; that span reads GRS.

It belongs to the tetrahydrofolate dehydrogenase/cyclohydrolase family. As to quaternary structure, homodimer.

It catalyses the reaction (6R)-5,10-methylene-5,6,7,8-tetrahydrofolate + NADP(+) = (6R)-5,10-methenyltetrahydrofolate + NADPH. The catalysed reaction is (6R)-5,10-methenyltetrahydrofolate + H2O = (6R)-10-formyltetrahydrofolate + H(+). It participates in one-carbon metabolism; tetrahydrofolate interconversion. Its function is as follows. Catalyzes the oxidation of 5,10-methylenetetrahydrofolate to 5,10-methenyltetrahydrofolate and then the hydrolysis of 5,10-methenyltetrahydrofolate to 10-formyltetrahydrofolate. This Alkaliphilus oremlandii (strain OhILAs) (Clostridium oremlandii (strain OhILAs)) protein is Bifunctional protein FolD.